The primary structure comprises 521 residues: Bifunctional purine biosynthesis protein PurH (521 aa).

The MGS-like domain maps to 1-147 (MAKITRALIS…KNNADVTVVV (147 aa)).

The protein belongs to the PurH family.

It carries out the reaction (6R)-10-formyltetrahydrofolate + 5-amino-1-(5-phospho-beta-D-ribosyl)imidazole-4-carboxamide = 5-formamido-1-(5-phospho-D-ribosyl)imidazole-4-carboxamide + (6S)-5,6,7,8-tetrahydrofolate. The catalysed reaction is IMP + H2O = 5-formamido-1-(5-phospho-D-ribosyl)imidazole-4-carboxamide. It participates in purine metabolism; IMP biosynthesis via de novo pathway; 5-formamido-1-(5-phospho-D-ribosyl)imidazole-4-carboxamide from 5-amino-1-(5-phospho-D-ribosyl)imidazole-4-carboxamide (10-formyl THF route): step 1/1. The protein operates within purine metabolism; IMP biosynthesis via de novo pathway; IMP from 5-formamido-1-(5-phospho-D-ribosyl)imidazole-4-carboxamide: step 1/1. The polypeptide is Bifunctional purine biosynthesis protein PurH (Geotalea uraniireducens (strain Rf4) (Geobacter uraniireducens)).